Consider the following 613-residue polypeptide: ATP-dependent zinc metalloprotease FtsH (613 aa).

The Cytoplasmic segment spans residues 1–4 (MVKN). The helical transmembrane segment at 5–25 (LIFWLVITVVLMSVFQNFNSS) threads the bilayer. The Extracellular portion of the chain corresponds to 26 to 98 (DTSNHRVDYS…VGEIPEEPSL (73 aa)). Residues 99–119 (LISIFISWFPMLLLIGVWIFF) traverse the membrane as a helical segment. The Cytoplasmic portion of the chain corresponds to 120–613 (MRQMQMGGGK…WLEVDQKKDI (494 aa)). Residue 192 to 199 (GPPGTGKT) coordinates ATP. His414 contributes to the Zn(2+) binding site. The active site involves Glu415. Zn(2+) contacts are provided by His418 and Asp492.

In the central section; belongs to the AAA ATPase family. The protein in the C-terminal section; belongs to the peptidase M41 family. Homohexamer. It depends on Zn(2+) as a cofactor.

The protein localises to the cell membrane. Acts as a processive, ATP-dependent zinc metallopeptidase for both cytoplasmic and membrane proteins. Plays a role in the quality control of integral membrane proteins. The protein is ATP-dependent zinc metalloprotease FtsH of Buchnera aphidicola subsp. Schizaphis graminum (strain Sg).